The following is a 644-amino-acid chain: uncharacterized protein (644 aa).

A disordered region spans residues 65–117 (DSDVETTGGGGRGSTTSTEDRIDEHDDAIEDDGVSNEEDENQDAEQEQEVDLN). Residues 89–114 (HDDAIEDDGVSNEEDENQDAEQEQEV) are compositionally biased toward acidic residues.

This is an uncharacterized protein from Arabidopsis thaliana (Mouse-ear cress).